We begin with the raw amino-acid sequence, 513 residues long: ATP synthase subunit alpha (513 aa).

169–176 (GDRQTGKT) is an ATP binding site.

It belongs to the ATPase alpha/beta chains family. F-type ATPases have 2 components, CF(1) - the catalytic core - and CF(0) - the membrane proton channel. CF(1) has five subunits: alpha(3), beta(3), gamma(1), delta(1), epsilon(1). CF(0) has three main subunits: a(1), b(2) and c(9-12). The alpha and beta chains form an alternating ring which encloses part of the gamma chain. CF(1) is attached to CF(0) by a central stalk formed by the gamma and epsilon chains, while a peripheral stalk is formed by the delta and b chains.

It localises to the cell inner membrane. The catalysed reaction is ATP + H2O + 4 H(+)(in) = ADP + phosphate + 5 H(+)(out). Functionally, produces ATP from ADP in the presence of a proton gradient across the membrane. The alpha chain is a regulatory subunit. This Actinobacillus pleuropneumoniae serotype 3 (strain JL03) protein is ATP synthase subunit alpha.